Reading from the N-terminus, the 432-residue chain is Zinc finger protein 829 (432 aa).

Residues 35–106 (VMFRDVSIDF…DRELTRGLCS (72 aa)) enclose the KRAB domain. Residues 156 to 178 (WECKICGKTFNQNSQFIQHQRIH) form a C2H2-type 1 zinc finger. The C2H2-type 2; degenerate zinc finger occupies 184 to 206 (YESKEYGKSFSRGSLVTRHQRIH). C2H2-type zinc fingers lie at residues 212 to 234 (YECK…QRIH), 240 to 262 (YECK…QRIH), 268 to 290 (YECK…LRIH), 296 to 318 (YECK…QRMH), 324 to 346 (YECK…HRIH), 352 to 374 (YECE…QRIH), 380 to 402 (YECN…QRIH), and 408 to 430 (YDCK…EGIH).

The protein belongs to the krueppel C2H2-type zinc-finger protein family.

It is found in the nucleus. May be involved in transcriptional regulation. This is Zinc finger protein 829 (ZNF829) from Homo sapiens (Human).